Reading from the N-terminus, the 4834-residue chain is E3 ubiquitin-protein ligase HERC2 (4834 aa).

The tract at residues 50–88 is disordered; it reads TESTQNGELPPRKDDSVEPSGTKKEDLNDKEKKDEEETP. Residues 59-84 are compositionally biased toward basic and acidic residues; it reads PPRKDDSVEPSGTKKEDLNDKEKKDE. Position 272 is a phosphothreonine (Thr272). One copy of the RCC1 1-1 repeat lies at 415-461; sequence PTSHKGSLQEVIGWGLIGWKYYANVIGPIQCEGLANLGVTQIACAEK. Residues 462 to 512 form an RCC1 1-2 repeat; sequence RFLILSRNGRVYTQAYNSDTLAPQLVQGLASRNIVKIAAHSDGHHYLALAA. One copy of the RCC1 1-3 repeat lies at 513 to 568; it reads TGEVYSWGCGDGGRLGHGDTVPLEEPKVISAFSGKQAGKHVVHIACGSTYSAAITA. Residues 569-620 form an RCC1 1-4 repeat; sequence EGELYTWGRGNYGRLGHGSSEDEAIPMLVAGLKGLKVIDVACGSGDAQTLAV. An RCC1 1-5 repeat occupies 623 to 674; the sequence is NGQVWSWGDGDYGKLGRGGSDGCKTPKLIEKLQDLDVVKVRCGSQFSIALTK. Residue Thr647 is modified to Phosphothreonine. One copy of the RCC1 1-6 repeat lies at 675-726; it reads DGQVYSWGKGDNQRLGHGTEEHVRYPKLLEGLQGKKVIDVAAGSTHCLALTE. The RCC1 1-7 repeat unit spans residues 728–778; it reads SEVHSWGSNDQCQHFDTLRVTKPEPAALPGLDTKHIVGIACGPAQSFAWSS. Residues 948 to 980 are a coiled coil; it reads LHAAITAEIQDIEAKKEAQKEKEIDEQEANAST. Residues 1207–1283 form the Cytochrome b5 heme-binding domain; that stretch reads VTLIRKADLE…MHAFCVGQYL (77 aa). Residues 1555-1575 are disordered; sequence RKKRVPKKPESTDDEEKIGNE. The segment covering 1566-1575 has biased composition (acidic residues); that stretch reads TDDEEKIGNE. Ser1577 carries the post-translational modification Phosphoserine. The 74-residue stretch at 1859-1932 folds into the MIB/HERC2 domain; sequence SGPELAAMMK…KYDLKLAELP (74 aa). The tract at residues 1933 to 1958 is disordered; it reads AAAQPSAEDSDTEDDSEAEQTERNIH. The span at 1940-1951 shows a compositional bias: acidic residues; it reads EDSDTEDDSEAE. Residue Ser1942 is modified to Phosphoserine. Thr1944 bears the Phosphothreonine mark. Ser2454 carries the phosphoserine modification. A CPH domain is found at 2554-2630; that stretch reads RADFLSNDDY…RYIHVELIGY (77 aa). The ZZ-type zinc-finger motif lies at 2703 to 2755; it reads HPGVTCDGCQMFPINGSRFKCRNCDDFDFCETCFKTKKHNTRHTFGRINEPGQ. Positions 2708, 2711, 2723, 2726, 2732, 2735, 2741, and 2745 each coordinate Zn(2+). A DOC domain is found at 2759 to 2936; the sequence is FCGRSGKQLK…ASDNEEEEDE (178 aa). Phosphoserine is present on Ser2928. The stretch at 2958-3009 is one RCC1 2-1 repeat; sequence RTKVFVWGLNDKDQLGGLKGSKIKVPSFSETLSALNVVQVAGGSKSLFAVTV. Residues 3010–3064 form an RCC1 2-2 repeat; that stretch reads EGKVYACGEATNGRLGLGISSGTVPIPRQITALSSYVVKKVAVHSGGRHATALTV. Residues 3065–3116 form an RCC1 2-3 repeat; the sequence is DGKVFSWGEGDDGKLGHFSRMNCDKPRLIEALKTKRIRDIACGSSHSAALTS. Residues 3118–3168 form an RCC1 2-4 repeat; the sequence is GELYTWGLGEYGRLGHGDNTTQLKPKMVKVLLGHRVIQVACGSRDAQTLAL. One copy of the RCC1 2-5 repeat lies at 3171-3222; it reads EGLVFSWGDGDFGKLGRGGSEGCNIPQNIERLNGQGVCQIECGAQFSLALTK. An RCC1 2-6 repeat occupies 3224-3274; the sequence is GVVWTWGKGDYFRLGHGSDVHVRKPQVVEGLRGKKIVHVAVGALHCLAVTD. The stretch at 3275–3326 is one RCC1 2-7 repeat; the sequence is SGQVYAWGDNDHGQQGNGTTTVNRKPTLVQGLEGQKITRVACGSSHSVAWTT. Polar residues-rich tracts occupy residues 3602–3611 and 3618–3629; these read SQSGRLSSQP and HPYTDDTSTSGT. The segment at 3602-3629 is disordered; the sequence is SQSGRLSSQPVVVESSHPYTDDTSTSGT. One copy of the RCC1 3-1 repeat lies at 3951 to 4002; the sequence is SGTIYGWGHNHRGQLGGIEGAKVKVPTPCEALATLRPVQLIGGEQTLFAVTA. One copy of the RCC1 3-2 repeat lies at 4004–4056; that stretch reads GKLYATGYGAGGRLGIGGTESVSTPTLLESIQHVFIKKVAVNSGGKHCLALSS. The stretch at 4058–4108 is one RCC1 3-3 repeat; the sequence is GEVYSWGEAEDGKLGHGNRSPCDRPRVIESLRGIEVVDVAAGGAHSACVTA. Residues 4110 to 4162 form an RCC1 3-4 repeat; that stretch reads GDLYTWGKGRYGRLGHSDSEDQLKPKLVEALQGHRVVDIACGSGDAQTLCLTD. The stretch at 4164–4214 is one RCC1 3-5 repeat; that stretch reads DTVWSWGDGDYGKLGRGGSDGCKVPMKIDSLTGLGVVKVECGSQFSVALTK. One copy of the RCC1 3-6 repeat lies at 4216–4266; it reads GAVYTWGKGDYHRLGHGSDDHVRRPRQVQGLQGKKVIAIATGSLHCVCCTE. An RCC1 3-7 repeat occupies 4268-4318; it reads GEVYTWGDNDEGQLGDGTTNAIQRPRLVAALQGKKVNRVACGSAHTLAWST. Positions 4457–4794 constitute an HECT domain; the sequence is DSLLLPHRVW…IHFCKSIDTD (338 aa). Cys4762 (glycyl thioester intermediate) is an active-site residue. Positions 4804–4834 are disordered; the sequence is EPAADDSSDDSDNEDVDSFASDSTQDYLTGH. Over residues 4806-4820 the composition is skewed to acidic residues; it reads AADDSSDDSDNEDVD. A phosphoserine mark is found at Ser4810, Ser4811, and Ser4814. The span at 4823 to 4834 shows a compositional bias: polar residues; that stretch reads ASDSTQDYLTGH. Position 4827 is a phosphothreonine (Thr4827).

Interacts (when phosphorylated at Thr-4827 and sumoylated) with RNF8 (via FHA domain); this interaction increases after ionizing radiation (IR) treatment. Interacts with XPA. Interacts with NEURL4. Via its interaction with NEURL4, may indirectly interact with CCP110 and CEP97. Phosphorylation at Thr-4827 is required for interaction with RNF8. Post-translationally, sumoylated with SUMO1 by PIAS4 in response to double-strand breaks (DSBs), promoting the interaction with RNF8.

Its subcellular location is the cytoplasm. The protein resides in the cytoskeleton. It localises to the microtubule organizing center. The protein localises to the centrosome. It is found in the centriole. Its subcellular location is the nucleus. The enzyme catalyses S-ubiquitinyl-[E2 ubiquitin-conjugating enzyme]-L-cysteine + [acceptor protein]-L-lysine = [E2 ubiquitin-conjugating enzyme]-L-cysteine + N(6)-ubiquitinyl-[acceptor protein]-L-lysine.. It participates in protein modification; protein ubiquitination. E3 ubiquitin-protein ligase that regulates ubiquitin-dependent retention of repair proteins on damaged chromosomes. Recruited to sites of DNA damage in response to ionizing radiation (IR) and facilitates the assembly of UBE2N and RNF8 promoting DNA damage-induced formation of 'Lys-63'-linked ubiquitin chains. Acts as a mediator of binding specificity between UBE2N and RNF8. Involved in the maintenance of RNF168 levels. E3 ubiquitin-protein ligase that promotes the ubiquitination and proteasomal degradation of XPA which influences the circadian oscillation of DNA excision repair activity. By controlling the steady-state expression of the IGF1R receptor, indirectly regulates the insulin-like growth factor receptor signaling pathway. Also modulates iron metabolism by regulating the basal turnover of FBXL5. This Homo sapiens (Human) protein is E3 ubiquitin-protein ligase HERC2.